A 439-amino-acid polypeptide reads, in one-letter code: Adenylosuccinate synthetase (439 aa).

Residues 12–18 and 40–42 contribute to the GTP site; these read GDEGKGK and GHT. Aspartate 13 acts as the Proton acceptor in catalysis. Residues aspartate 13 and glycine 40 each contribute to the Mg(2+) site. IMP contacts are provided by residues 13–16, 38–41, threonine 137, arginine 151, glutamine 232, threonine 247, and arginine 311; these read DEGK and NAGH. Histidine 41 functions as the Proton donor in the catalytic mechanism. 307 to 313 serves as a coordination point for substrate; sequence ATTGRPR. GTP is bound by residues arginine 313, 339 to 341, and 421 to 423; these read KLD and SNG.

It belongs to the adenylosuccinate synthetase family. As to quaternary structure, homodimer. Mg(2+) is required as a cofactor.

Its subcellular location is the cytoplasm. It carries out the reaction IMP + L-aspartate + GTP = N(6)-(1,2-dicarboxyethyl)-AMP + GDP + phosphate + 2 H(+). Its pathway is purine metabolism; AMP biosynthesis via de novo pathway; AMP from IMP: step 1/2. In terms of biological role, plays an important role in the de novo pathway of purine nucleotide biosynthesis. Catalyzes the first committed step in the biosynthesis of AMP from IMP. In Salinibacter ruber (strain DSM 13855 / M31), this protein is Adenylosuccinate synthetase.